The following is a 509-amino-acid chain: Scavenger receptor class B member 1 (509 aa).

The Cytoplasmic portion of the chain corresponds to 1 to 11; that stretch reads MGGSSRARWVA. The chain crosses the membrane as a helical span at residues 12 to 32; it reads LGLGALGLLFAALGVVMILMV. The Extracellular segment spans residues 33-440; sequence PSLIKQQVLK…YTQLVLMPQV (408 aa). N-linked (GlcNAc...) asparagine glycans are attached at residues Asn102, Asn108, Asn116, Asn173, Asn212, Asn227, Asn255, Asn288, Asn310, Asn330, and Asn383. The cysteines at positions 251 and 384 are disulfide-linked. A helical membrane pass occupies residues 441–461; it reads LHYAQYVLLGLGGLLLLVPII. Cys462 is lipidated: S-palmitoyl cysteine. At 462–509 the chain is on the cytoplasmic side; sequence CQLRSQEKCFLFWSGSKKGSQDKEAIQAYSESLMSPAAKGTVLQEAKL.

The protein belongs to the CD36 family. In terms of assembly, the C-terminal region binds to PDZK1. N-glycosylated. In terms of processing, the six cysteines of the extracellular domain are all involved in intramolecular disulfide bonds. As to expression, expressed primarily in liver, ovary and adrenal gland, and, at lower levels in other non-placental steroidogenic tissues, including adipose tissue, mammary gland and testis (at protein level). Isoform 2 is expressed at lower levels than isoform 1 in liver, testis and adrenal gland. At the mRNA, but not at the protein level, isoform 2 is the predominant isoform in testis (80%).

The protein localises to the cell membrane. The protein resides in the membrane. It is found in the caveola. In terms of biological role, receptor for different ligands such as phospholipids, cholesterol ester, lipoproteins, phosphatidylserine and apoptotic cells. Both isoform 1 and isoform 2 act as receptors for HDL, mediating selective uptake of cholesteryl ether and HDL-dependent cholesterol efflux. Also facilitates the flux of free and esterified cholesterol between the cell surface and apoB-containing lipoproteins and modified lipoproteins, although less efficiently than HDL. May be involved in the phagocytosis of apoptotic cells, via its phosphatidylserine binding activity. The chain is Scavenger receptor class B member 1 (Scarb1) from Mus musculus (Mouse).